The following is a 20-amino-acid chain: Fibrinogen beta chain (20 aa).

Positions Ile1–Arg12 are enriched in acidic residues. Positions Ile1 to Arg20 are disordered.

As to quaternary structure, heterohexamer; disulfide linked. Contains 2 sets of 3 non-identical chains (alpha, beta and gamma). The 2 heterotrimers are in head to head conformation with the N-termini in a small central domain. Conversion of fibrinogen to fibrin is triggered by thrombin, which cleaves fibrinopeptides A and B from alpha and beta chains, and thus exposes the N-terminal polymerization sites responsible for the formation of the soft clot.

The protein resides in the secreted. In terms of biological role, cleaved by the protease thrombin to yield monomers which, together with fibrinogen alpha (FGA) and fibrinogen gamma (FGG), polymerize to form an insoluble fibrin matrix. Fibrin has a major function in hemostasis as one of the primary components of blood clots. In addition, functions during the early stages of wound repair to stabilize the lesion and guide cell migration during re-epithelialization. Was originally thought to be essential for platelet aggregation, based on in vitro studies using anticoagulated blood. However subsequent studies have shown that it is not absolutely required for thrombus formation in vivo. Enhances expression of SELP in activated platelets. Maternal fibrinogen is essential for successful pregnancy. Fibrin deposition is also associated with infection, where it protects against IFNG-mediated hemorrhage. May also facilitate the antibacterial immune response via both innate and T-cell mediated pathways. This Felis catus (Cat) protein is Fibrinogen beta chain (FGB).